A 151-amino-acid polypeptide reads, in one-letter code: MRVRIAVIGKLDGFIKEGIKHYEKFLRRFCKPEVLEIKRVHRGSIEEIVRKETEDLTNRILPGSFVMVMDKRGEEVSSEEFADFLKDLEMKGKDITILIGGPYGLNEEIFAKAHRVFSLSKMTFTHGMTVLIVLEQIFRAFKIIHGENYHY.

Residues Gly100 and 119-124 contribute to the S-adenosyl-L-methionine site; that span reads LSKMTF.

It belongs to the RNA methyltransferase RlmH family. As to quaternary structure, homodimer.

It is found in the cytoplasm. It carries out the reaction pseudouridine(1915) in 23S rRNA + S-adenosyl-L-methionine = N(3)-methylpseudouridine(1915) in 23S rRNA + S-adenosyl-L-homocysteine + H(+). In terms of biological role, specifically methylates the pseudouridine at position 1915 (m3Psi1915) in 23S rRNA. This Thermotoga maritima (strain ATCC 43589 / DSM 3109 / JCM 10099 / NBRC 100826 / MSB8) protein is Ribosomal RNA large subunit methyltransferase H.